The primary structure comprises 234 residues: Large ribosomal subunit protein uL1c (234 aa).

Belongs to the universal ribosomal protein uL1 family. In terms of assembly, part of the 50S ribosomal subunit.

The protein resides in the plastid. It is found in the chloroplast. In terms of biological role, binds directly to 23S rRNA. Might be involved in E site tRNA release (Potential). The polypeptide is Large ribosomal subunit protein uL1c (rpl1) (Rhodomonas salina (Cryptomonas salina)).